The sequence spans 407 residues: 12S rRNA N(4)-cytidine methyltransferase METTL15 (407 aa).

S-adenosyl-L-methionine contacts are provided by residues 100-102 (GGH), Asp-119, Phe-146, Asp-169, and Gln-176. Ser-358 is subject to Phosphoserine.

The protein belongs to the methyltransferase superfamily. RsmH family.

The protein localises to the mitochondrion matrix. The catalysed reaction is cytidine(839) in 12S rRNA + S-adenosyl-L-methionine = N(4)-methylcytidine(839) in 12S rRNA + S-adenosyl-L-homocysteine + H(+). Functionally, N4-methylcytidine (m4C) methyltransferase responsible for the methylation of position C839 in mitochondrial 12S rRNA. Involved in the stabilization of 12S rRNA folding, therefore facilitating the assembly of the mitochondrial small ribosomal subunits. The chain is 12S rRNA N(4)-cytidine methyltransferase METTL15 (METTL15) from Pongo abelii (Sumatran orangutan).